The primary structure comprises 785 residues: Protein SEY1 (785 aa).

Residues 1-690 (MTDLEVSAIQ…KRSVINSKTE (690 aa)) lie on the Cytoplasmic side of the membrane. Residues 40–266 (GLNYHIVSVF…SEDQLFNEGY (227 aa)) enclose the GB1/RHD3-type G domain. 50–57 (GSQSTGKS) serves as a coordination point for GTP. Residues 451–479 (PKLRELEEELSNLRTELVNKEQENIKTKI) adopt a coiled-coil conformation. The helical transmembrane segment at 691–711 (VPLYIYALLLVLGWNEFMIIL) threads the bilayer. Residues 712-714 (RNP) lie on the Lumenal side of the membrane. The chain crosses the membrane as a helical span at residues 715–735 (LLITLLLIGLTGLYLGYKTKL). Over 736–785 (LGPIVQVVQAMIQELQDQAKNKLRDVLVSEPEAPSQVRIGKEVDATKDED) the chain is Cytoplasmic.

Belongs to the TRAFAC class dynamin-like GTPase superfamily. GB1/RHD3 GTPase family. RHD3 subfamily.

It is found in the endoplasmic reticulum membrane. Functionally, cooperates with the reticulon proteins and tubule-shaping DP1 family proteins to generate and maintain the structure of the tubular endoplasmic reticulum network. Has GTPase activity, which is required for its function in ER organization. This Komagataella phaffii (strain GS115 / ATCC 20864) (Yeast) protein is Protein SEY1.